The following is a 506-amino-acid chain: Alpha-L-arabinofuranosidase B (506 aa).

The first 26 residues, 1–26, serve as a signal peptide directing secretion; sequence MSSGLSLERACAVALGIVASASLVAA. The segment at 27-343 is catalytic; the sequence is GPCDIYSSGG…ADIVAAKYAI (317 aa). Disulfide bonds link Cys-29/Cys-39, Cys-89/Cys-94, and Cys-184/Cys-185. An N-linked (GlcNAc...) asparagine glycan is attached at Asn-91. Substrate is bound at residue Asp-227. The active-site Nucleophile is Glu-229. Residues Asn-230 and Gly-304 each contribute to the substrate site. Asp-305 acts as the Proton donor in catalysis. The interval 344–506 is ABD; the sequence is ASLTSGPALT…VSWVVSTGFA (163 aa). The cysteines at positions 409 and 447 are disulfide-linked. Positions 424, 426, 427, 443, 471, 473, 476, and 496 each coordinate substrate.

Belongs to the glycosyl hydrolase 54 family.

The protein resides in the secreted. It catalyses the reaction Hydrolysis of terminal non-reducing alpha-L-arabinofuranoside residues in alpha-L-arabinosides.. The protein operates within glycan metabolism; L-arabinan degradation. Functionally, alpha-L-arabinofuranosidase involved in the degradation of arabinoxylan, a major component of plant hemicellulose. Able to hydrolyze 1,5-, 1,3- and 1,2-alpha-linkages not only in L-arabinofuranosyl oligosaccharides, but also in polysaccharides containing terminal non-reducing L-arabinofuranoses in side chains, like L-arabinan, arabinogalactan and arabinoxylan. The sequence is that of Alpha-L-arabinofuranosidase B (abfB) from Aspergillus oryzae (strain ATCC 42149 / RIB 40) (Yellow koji mold).